A 187-amino-acid chain; its full sequence is Shikimate kinase (187 aa).

18-23 (GCGKST) lines the ATP pocket. Mg(2+) is bound at residue S22. Positions 40, 64, and 86 each coordinate substrate. R128 contacts ATP. R147 lines the substrate pocket. Residue R164 coordinates ATP.

This sequence belongs to the shikimate kinase family. Monomer. Requires Mg(2+) as cofactor.

It is found in the cytoplasm. It catalyses the reaction shikimate + ATP = 3-phosphoshikimate + ADP + H(+). Its pathway is metabolic intermediate biosynthesis; chorismate biosynthesis; chorismate from D-erythrose 4-phosphate and phosphoenolpyruvate: step 5/7. Catalyzes the specific phosphorylation of the 3-hydroxyl group of shikimic acid using ATP as a cosubstrate. In Rhodopirellula baltica (strain DSM 10527 / NCIMB 13988 / SH1), this protein is Shikimate kinase.